We begin with the raw amino-acid sequence, 238 residues long: Survival of motor neuron-related-splicing factor 30 (238 aa).

The Tudor domain maps to 72–132 (SWKVGDKCMA…KPVEEGRKAK (61 aa)). Positions 142–160 (KKEMIAQQREYKKKKALKK) match the Nuclear localization signal motif. Ser-201 bears the Phosphoserine mark. Residue Lys-219 is modified to N6-acetyllysine.

It belongs to the SMN family. In terms of assembly, associates with spliceosomes. Associates with U4/U5/U6 tri-snRNP and with U2 snRNP. Interacts (via Tudor domain) with SNRPD3 (via C-terminus); the interaction is direct. Detected at intermediate levels in skeletal muscle, and at low levels in heart and pancreas.

The protein localises to the nucleus speckle. It is found in the nucleus. The protein resides in the cajal body. Its function is as follows. Involved in spliceosome assembly. The protein is Survival of motor neuron-related-splicing factor 30 (SMNDC1) of Homo sapiens (Human).